The primary structure comprises 322 residues: Methionyl-tRNA formyltransferase (322 aa).

Residue 113–116 coordinates (6S)-5,6,7,8-tetrahydrofolate; it reads SLLP.

It belongs to the Fmt family.

The catalysed reaction is L-methionyl-tRNA(fMet) + (6R)-10-formyltetrahydrofolate = N-formyl-L-methionyl-tRNA(fMet) + (6S)-5,6,7,8-tetrahydrofolate + H(+). In terms of biological role, attaches a formyl group to the free amino group of methionyl-tRNA(fMet). The formyl group appears to play a dual role in the initiator identity of N-formylmethionyl-tRNA by promoting its recognition by IF2 and preventing the misappropriation of this tRNA by the elongation apparatus. In Bacteroides thetaiotaomicron (strain ATCC 29148 / DSM 2079 / JCM 5827 / CCUG 10774 / NCTC 10582 / VPI-5482 / E50), this protein is Methionyl-tRNA formyltransferase.